The chain runs to 873 residues: Potassium voltage-gated channel subfamily KQT member 3 (873 aa).

A disordered region spans residues 1–41; the sequence is MGLKARRAAGAAGGGGGEGGGGGGGAANPAGGDSAVAGDEE. Topologically, residues 1–121 are cytoplasmic; sequence MGLKARRAAG…IYDALERPRG (121 aa). Over residues 11–26 the composition is skewed to gly residues; sequence AAGGGGGEGGGGGGGA. Position 82 is a phosphothreonine (T82). A helical transmembrane segment spans residues 122–144; sequence WALLYHALVFLIVLGCLILAVLT. Residues 145-154 are Extracellular-facing; sequence TFKEYETVSG. The chain crosses the membrane as a helical span at residues 155-176; the sequence is DWLLLLETFAIFIFGAEFALRI. At 177-194 the chain is on the cytoplasmic side; it reads WAAGCCCRYKGWRGRLKF. A helical transmembrane segment spans residues 195 to 214; sequence ARKPLCMLDIFVLIASVPVV. The Extracellular segment spans residues 215-226; it reads AVGNQGNVLATS. A helical; Voltage-sensor transmembrane segment spans residues 227–245; sequence LRSLRFLQILRMLRMDRRG. R244 provides a ligand contact to a 1,2-diacyl-sn-glycero-3-phospho-(1D-myo-inositol-4,5-bisphosphate). Residues 246-257 lie on the Cytoplasmic side of the membrane; sequence GTWKLLGSAICA. Residues 258–283 form a helical membrane-spanning segment; the sequence is HSKELITAWYIGFLTLILSSFLVYLV. A 1,2-diacyl-sn-glycero-3-phospho-(1D-myo-inositol-4,5-bisphosphate) is bound at residue K260. At 284–303 the chain is on the extracellular side; it reads EKDVPEMDAQGEEMKEEFET. An intramembrane region (pore-forming) is located at residues 304–316; it reads YADALWWGLITLA. The short motif at 317 to 322 is the Selectivity filter element; that stretch reads TIGYGD. The Extracellular portion of the chain corresponds to 317 to 327; sequence TIGYGDKTPKT. The helical transmembrane segment at 328–354 threads the bilayer; the sequence is WEGRLIAATFSLIGVSFFALPAGILGS. Topologically, residues 355-873 are cytoplasmic; that stretch reads GLALKVQEQH…SIWTPSNKPT (519 aa). The mediates interaction with calmodulin stretch occupies residues 357–538; it reads ALKVQEQHRQ…RLYKKKFKET (182 aa). K367 contributes to the a 1,2-diacyl-sn-glycero-3-phospho-(1D-myo-inositol-4,5-bisphosphate) binding site. 3 disordered regions span residues 575–603, 723–742, and 766–873; these read PGPPSTPKHKKSQKGSAFTYPSQQSPRNE, RGGPSSTKAQANLPSSGSTY, and ELQG…NKPT. Composition is skewed to polar residues over residues 588–601, 725–741, and 844–873; these read KGSAFTYPSQQSPR, GPSSTKAQANLPSSGST, and DPFTPSGSMPMSSTGDGISDSIWTPSNKPT.

It belongs to the potassium channel family. KQT (TC 1.A.1.15) subfamily. Kv7.3/KCNQ3 sub-subfamily. Heterotetramer with KCNQ2; forms heterotetrameric M-channel responsible for the native M-current. Interacts with calmodulin; the interaction is calcium-independent, constitutive and participates in the proper assembly of a functional M-channel. Heteromultimer with KCNQ5. May associate with KCNE2. Interacts with IQCJ-SCHIP1. Interacts (via the pore module) with SLC5A3/SMIT1; forms a coregulatory complex that alters ion selectivity, voltage dependence and gating kinetics of the channel. Post-translationally, KCNQ2/KCNQ3 are ubiquitinated by NEDD4L. Ubiquitination leads to protein degradation. Degradation induced by NEDD4L is inhibited by USP36. As to expression, expressed in brain and sympathetic ganglia. In brain, expressed in cortex, hippocampus and at much lower levels in cerebellum. In sympathetic ganglia, expressed at approximately equal levels in both superior cervical ganglia and prevertebral ganglia.

The protein localises to the cell membrane. It catalyses the reaction K(+)(in) = K(+)(out). The enzyme catalyses Rb(+)(in) = Rb(+)(out). The catalysed reaction is Cs(+)(in) = Cs(+)(out). It carries out the reaction Na(+)(in) = Na(+)(out). Phosphatidylinositol-4,5-bisphosphate (PIP2) potentiates the activation of KCNQ channels by enhancing the electro-mechanical coupling of the voltage-sensing domain (VSD) and the pore-forming domain (PD). In the closed state of the channel, PIP2 is anchored at the S2-S3 loop; upon channel activation, PIP2 interacts with the S4-S5 linker and is involved in channel gating. Calcium suppresses KCNQ2-KCNQ3 channel currents, with calcium-bound calmodulin inducing a change in channel configuration which leads to the reduction of channel affinity for PIP2 and subsequent current suppression. M-channel is blocked by XE991. Pore-forming subunit of the voltage-gated potassium (Kv) M-channel which is responsible for the M-current, a key controller of neuronal excitability. M-channel is composed of pore-forming subunits KCNQ2 and KCNQ3 assembled as heterotetramers, each subunit containing a voltage sensing domain (VSD) and a pore-forming domain (PD). The native M-current has a slowly activating and deactivating potassium conductance which plays a critical role in determining the subthreshold electrical excitability of neurons as well as the responsiveness to synaptic inputs. M-channel is selectively permeable in vitro to other cations besides potassium, in decreasing order of affinity K(+) &gt; Rb(+) &gt; Cs(+) &gt; Na(+). M-channel association with SLC5A3/SMIT1 alters channel ion selectivity, increasing Na(+) and Cs(+) permeation relative to K(+). Suppressed by activation of M1 muscarinic acetylcholine receptors. KCNQ3 also associates with KCNQ5 to form a functional channel in vitro and may also contribute to the M-current in brain. In Rattus norvegicus (Rat), this protein is Potassium voltage-gated channel subfamily KQT member 3.